The primary structure comprises 155 residues: Small ribosomal subunit protein uS7cz/uS7cy (155 aa).

The protein belongs to the universal ribosomal protein uS7 family. In terms of assembly, part of the 30S ribosomal subunit.

The protein localises to the plastid. It is found in the chloroplast. In terms of biological role, one of the primary rRNA binding proteins, it binds directly to 16S rRNA where it nucleates assembly of the head domain of the 30S subunit. The sequence is that of Small ribosomal subunit protein uS7cz/uS7cy (rps7-A) from Lactuca sativa (Garden lettuce).